The primary structure comprises 271 residues: Tryptophan synthase alpha chain (271 aa).

Catalysis depends on proton acceptor residues Glu-49 and Asp-60.

It belongs to the TrpA family. In terms of assembly, tetramer of two alpha and two beta chains.

It catalyses the reaction (1S,2R)-1-C-(indol-3-yl)glycerol 3-phosphate + L-serine = D-glyceraldehyde 3-phosphate + L-tryptophan + H2O. It participates in amino-acid biosynthesis; L-tryptophan biosynthesis; L-tryptophan from chorismate: step 5/5. The alpha subunit is responsible for the aldol cleavage of indoleglycerol phosphate to indole and glyceraldehyde 3-phosphate. In Blochmanniella floridana, this protein is Tryptophan synthase alpha chain.